Reading from the N-terminus, the 273-residue chain is Large ribosomal subunit protein uL2cz/uL2cy (273 aa).

2 disordered regions span residues 1-23 (MAIH…SQVK) and 223-273 (NPVD…RRSK).

The protein belongs to the universal ribosomal protein uL2 family. In terms of assembly, part of the 50S ribosomal subunit.

The protein resides in the plastid. It is found in the chloroplast. This Oenothera argillicola (Appalachian evening primrose) protein is Large ribosomal subunit protein uL2cz/uL2cy (rpl2-A).